A 151-amino-acid chain; its full sequence is Large ribosomal subunit protein bL9 (151 aa).

The protein belongs to the bacterial ribosomal protein bL9 family.

In terms of biological role, binds to the 23S rRNA. This Azoarcus sp. (strain BH72) protein is Large ribosomal subunit protein bL9.